A 305-amino-acid polypeptide reads, in one-letter code: UDP-3-O-acyl-N-acetylglucosamine deacetylase (305 aa).

Zn(2+) is bound by residues H78, H237, and D241. Residue H264 is the Proton donor of the active site.

Belongs to the LpxC family. The cofactor is Zn(2+).

The catalysed reaction is a UDP-3-O-[(3R)-3-hydroxyacyl]-N-acetyl-alpha-D-glucosamine + H2O = a UDP-3-O-[(3R)-3-hydroxyacyl]-alpha-D-glucosamine + acetate. It functions in the pathway glycolipid biosynthesis; lipid IV(A) biosynthesis; lipid IV(A) from (3R)-3-hydroxytetradecanoyl-[acyl-carrier-protein] and UDP-N-acetyl-alpha-D-glucosamine: step 2/6. Functionally, catalyzes the hydrolysis of UDP-3-O-myristoyl-N-acetylglucosamine to form UDP-3-O-myristoylglucosamine and acetate, the committed step in lipid A biosynthesis. The chain is UDP-3-O-acyl-N-acetylglucosamine deacetylase from Paraburkholderia phytofirmans (strain DSM 17436 / LMG 22146 / PsJN) (Burkholderia phytofirmans).